Here is a 359-residue protein sequence, read N- to C-terminus: 3-dehydroquinate synthase (359 aa).

Residues 71 to 76 (DGEQFK), 105 to 109 (GVIGD), 129 to 130 (TT), Lys142, Lys151, and 169 to 172 (CLQT) contribute to the NAD(+) site. The Zn(2+) site is built by Glu184, His247, and His264.

This sequence belongs to the sugar phosphate cyclases superfamily. Dehydroquinate synthase family. It depends on Co(2+) as a cofactor. Requires Zn(2+) as cofactor. The cofactor is NAD(+).

Its subcellular location is the cytoplasm. The catalysed reaction is 7-phospho-2-dehydro-3-deoxy-D-arabino-heptonate = 3-dehydroquinate + phosphate. It participates in metabolic intermediate biosynthesis; chorismate biosynthesis; chorismate from D-erythrose 4-phosphate and phosphoenolpyruvate: step 2/7. Catalyzes the conversion of 3-deoxy-D-arabino-heptulosonate 7-phosphate (DAHP) to dehydroquinate (DHQ). The protein is 3-dehydroquinate synthase of Shewanella sp. (strain MR-4).